The chain runs to 149 residues: Arginine repressor (149 aa).

The protein belongs to the ArgR family.

It is found in the cytoplasm. It functions in the pathway amino-acid biosynthesis; L-arginine biosynthesis [regulation]. Its function is as follows. Regulates arginine biosynthesis genes. In Alkaliphilus metalliredigens (strain QYMF), this protein is Arginine repressor.